Consider the following 383-residue polypeptide: tRNA pseudouridine synthase B (383 aa).

The active-site Nucleophile is the aspartate 53.

It belongs to the pseudouridine synthase TruB family. Type 1 subfamily.

The catalysed reaction is uridine(55) in tRNA = pseudouridine(55) in tRNA. Responsible for synthesis of pseudouridine from uracil-55 in the psi GC loop of transfer RNAs. This chain is tRNA pseudouridine synthase B, found in Tropheryma whipplei (strain TW08/27) (Whipple's bacillus).